The chain runs to 155 residues: Cytochrome c-type biogenesis protein CcmE (155 aa).

Topologically, residues 1-8 (MNPRRKKR) are cytoplasmic. A helical; Signal-anchor for type II membrane protein membrane pass occupies residues 9–29 (LLITSLLAVALSLAVGLVLFA). At 30-155 (LQQNIDLFYT…GMDNFKANNK (126 aa)) the chain is on the periplasmic side. The heme site is built by H131 and Y135.

This sequence belongs to the CcmE/CycJ family.

It localises to the cell inner membrane. Functionally, heme chaperone required for the biogenesis of c-type cytochromes. Transiently binds heme delivered by CcmC and transfers the heme to apo-cytochromes in a process facilitated by CcmF and CcmH. This chain is Cytochrome c-type biogenesis protein CcmE, found in Psychromonas ingrahamii (strain DSM 17664 / CCUG 51855 / 37).